Consider the following 444-residue polypeptide: D(2) dopamine receptor (444 aa).

The Extracellular segment spans residues 1-37 (MDPLNLSWYDDDPESRNWSRPFNGSEGKADRPPYNYY). Residues Asn-5, Asn-17, and Asn-23 are each glycosylated (N-linked (GlcNAc...) asparagine). A helical membrane pass occupies residues 38-60 (AMLLTLLIFVIVFGNVLVCMAVS). The Cytoplasmic portion of the chain corresponds to 61 to 70 (REKALQTTTN). The chain crosses the membrane as a helical span at residues 71–93 (YLIVSLAVADLLVATLVMPWVVY). Residues 94 to 108 (LEVVGEWKFSRIHCD) lie on the Extracellular side of the membrane. Cysteines 107 and 182 form a disulfide. Residues 109–130 (IFVTLDVMMCTASILNLCAISI) form a helical membrane-spanning segment. Residues 131–151 (DRYTAVAMPMLYNTRYSSKRR) lie on the Cytoplasmic side of the membrane. Residues 152 to 172 (VTVMIAIVWVLSFTISCPMLF) traverse the membrane as a helical segment. The Extracellular portion of the chain corresponds to 173–188 (GLNNTDQNECIIANPA). The chain crosses the membrane as a helical span at residues 189–213 (FVVYSSIVSFYVPFIVTLLVYIKIY). The interaction with PPP1R9B stretch occupies residues 211 to 374 (KIYIVLRRRR…SQQKEKKATQ (164 aa)). Residues 214–374 (IVLRRRRKRV…SQQKEKKATQ (161 aa)) lie on the Cytoplasmic side of the membrane. The disordered stretch occupies residues 281–332 (MEMLSSTSPPERTRYSPIPPSHHQLTLPDPSHHGLHSTPDSPAKPEKNGHAK). A helical transmembrane segment spans residues 375 to 396 (MLAIVLGVFIICWLPFFITHIL). Residues 397–410 (NIHCDCNIPPVLYS) are Extracellular-facing. Cysteines 400 and 402 form a disulfide. A helical transmembrane segment spans residues 411 to 432 (AFTWLGYVNSAVNPIIYTTFNI). The Cytoplasmic segment spans residues 433-444 (EFRKAFLKILHC). A lipid anchor (S-palmitoyl cysteine) is attached at Cys-444.

The protein belongs to the G-protein coupled receptor 1 family. Forms homo- and heterooligomers with DRD4. The interaction with DRD4 may modulate agonist-induced downstream signaling. Interacts with CADPS and CADPS2. Interacts with GPRASP1, PPP1R9B and CLIC6. Interacts with ARRB2. Interacts with HTR2A. Interacts with DRD1. Interacts with KCNA2. In terms of processing, palmitoylated. Palmitoylation which is required for proper localization to the plasma membrane and stability of the receptor could be carried on by ZDHHC4, ZDHHC3 and ZDHHC8.

The protein resides in the cell membrane. Its subcellular location is the golgi apparatus membrane. Its function is as follows. Dopamine receptor whose activity is mediated by G proteins which inhibit adenylyl cyclase. Positively regulates postnatal regression of retinal hyaloid vessels via suppression of VEGFR2/KDR activity, downstream of OPN5. The chain is D(2) dopamine receptor (DRD2) from Bos taurus (Bovine).